A 601-amino-acid chain; its full sequence is Glutathione-regulated potassium-efflux system protein KefB (601 aa).

Helical transmembrane passes span 4-24, 29-49, 55-75, 87-107, 111-131, 152-172, 177-197, 207-227, 230-250, 262-282, 284-304, 324-344, and 356-376; these read ADLL…VPLA, IGAV…GLGF, EILH…GLEL, IFGV…GLLM, FLWQ…TAMA, VLLF…LLAG, HFDW…LIGG, FIAA…LVLS, LFMD…GVLL, AIDP…GMSL, LGVL…LVVI, MQFA…FSTA, and ALLL…MKGI. The region spanning 400–519 is the RCK N-terminal domain; that stretch reads KPQVIVVGFG…AGVTQFSRET (120 aa).

This sequence belongs to the monovalent cation:proton antiporter 2 (CPA2) transporter (TC 2.A.37) family. KefB subfamily. Interacts with the regulatory subunit KefG.

Its subcellular location is the cell inner membrane. Its function is as follows. Pore-forming subunit of a potassium efflux system that confers protection against electrophiles. Catalyzes K(+)/H(+) antiport. The polypeptide is Glutathione-regulated potassium-efflux system protein KefB (Salmonella paratyphi C (strain RKS4594)).